The primary structure comprises 226 residues: Lipoprotein-releasing system ATP-binding protein LolD (226 aa).

The ABC transporter domain maps to 5–225 (LELVEIERHF…TLKEKKIVEL (221 aa)). 41 to 48 (APSGAGKS) contributes to the ATP binding site.

Belongs to the ABC transporter superfamily. Lipoprotein translocase (TC 3.A.1.125) family. As to quaternary structure, the complex is composed of two ATP-binding proteins (LolD) and two transmembrane proteins (LolC and LolE).

It localises to the cell inner membrane. Part of the ABC transporter complex LolCDE involved in the translocation of mature outer membrane-directed lipoproteins, from the inner membrane to the periplasmic chaperone, LolA. Responsible for the formation of the LolA-lipoprotein complex in an ATP-dependent manner. The protein is Lipoprotein-releasing system ATP-binding protein LolD of Bartonella quintana (strain Toulouse) (Rochalimaea quintana).